Here is a 1587-residue protein sequence, read N- to C-terminus: MLFEMTPETFKKVNSSNRIIKGLQYTPLASSIPLENGLQNVLYPSSKFQNEPLQLNSEESSIMQRYVDMLNPGATFVNDSETFNFYKNALSAMITEPAMPAMRVNASPVLDQKVCNSDSLSELNDFTKSLIQPSMLMCEPKEKPDASSINTNRSSSDNGFLTPSSSPRSPSCSRVFNAVQLCSPKKSKDDITTPKKRLMEDTYSPRESPSKIQRLQDVLLKQLQDTRLLISQVIEAENSEDFSSNSLFIKREDDDGKHISSHAIEKLYMALTKLSRLGACDKLLEEGSIILVKQILEKELKELPVACYSIINLHDSLTQFPNLDFILKTTALVLFIIFLVPSFKKLQNEESILHLLNILHSIFEYTVPEAIDNIVQSKTSDARTSEIQHLSVLLQKVANVLNILSKVAHEIPLSEAVVIRIVYLFPKVSTLDNSFKTKLPNCNSSSFDFLKAPLFQTLQYLFRLYPYQRDFIIEESLTNFSHLPTARSVSRTYRLSNGKSIQYYSTLFVRLIQSCSIQNLFDSEIVQSESKSTEALHSGNLTEHLKTVESILSKSRHEEYRIANHIVAYLLSRSLKQNKTESDNSFAILTKILLEDLLNMLSLPEWCGTETIIRQFAMNLVMTVTNDKQAVSSKNAALDLISLIVNKVLALFDLSLFEKHNIPAPTNFNDIISFIPSITRLNELSQVSFNHFYFLCKGDISLENILPYNYNKWFSFLLQLRKVCNDSEALKIIDNCIDKNMQKSQEGFQGPSPFKADENDEDIFIISLYHSSLFLNLKFFVSLIIGFLDSPQASLRTKCLRIINQMKTIPSILRTHPEVLAQIISKSNDQSAIVRDTVLDLLGTYIMAYRETIPQIYGCIISGISDPSTIVRKRAIKQLCEVYEATEDLNIRVDIASKLLTRSNDEEETISELSLEVLEKLWFSPASNELDCQKGYEQLTFLEKQKLRVQYFPILKLCAEPSTERHVLLVTSLKTMLTSKEEINLSTLHTQIRLLLSCLFNQLIEVVTEDQVDESTKGILYEIMSTLFVFSRAFPFLFDLSYLHLLKPYLRSASTIEEQRFLYYVVAIFRQVLPFQKEISESFLRSLESVLLQRLTKAGTATLMEIVPCLCSLFTRLNDYERLKKIVVSCLKSLEEARHSENNFQKMVRLIDLIGLFSRYGDLNRINDDWKHSLDFISPECDDAYVILLGYFQKLLKDAKGQLRIHIIDNMSRICLRETSLFISPLMLSTLDMIIAENNVNEVSVLFKSFLELLAADEDLIFEADQKLSLKGKQNVQSNKSVDRDMLKGTKDKQWIEGVSASLMQHFLPCILDSCFSKNLRYSMLGIEILKCIIHQGLVNPRMCFSTIIALESNAIKETREVAILLHTELHRRHESLIDGLYAQSADLIFSLQKTEEYQTFKLGEFSPFQSAYTIVSADKSSKSRKKLIMQILKPLKLDGIDLPSFTEEKVSFVSFCCVCLAGIPYVSIEEPLMIISTVDSVLATIGPTITGWMKKLDHERFKILAGINLCNLIYLKRYIKYAFSISDSSRPIREKKPLTLLNRGYVDLITSDAKPDIVSKLVIKLFEEENILSGEDQVEGEQLTVV.

Residues 140-172 (PKEKPDASSINTNRSSSDNGFLTPSSSPRSPSC) are disordered. Residues 147–162 (SSINTNRSSSDNGFLT) show a composition bias toward polar residues. A compositionally biased stretch (low complexity) spans 163 to 172 (PSSSPRSPSC). Serine 183 carries the post-translational modification Phosphoserine. HEAT repeat units follow at residues 775–812 (LNLKFFVSLIIGFLDSPQASLRTKCLRIINQMKTIPSI), 814–851 (RTHPEVLAQIISKSNDQSAIVRDTVLDLLGTYIMAYRE), 853–888 (IPQIYGCIISGISDPSTIVRKRAIKQLCEVYEATED), 890–927 (NIRVDIASKLLTRSNDEEETISELSLEVLEKLWFSPAS), 1101–1140 (ATLMEIVPCLCSLFTRLNDYERLKKIVVSCLKSLEEARHS), and 1183–1220 (DAYVILLGYFQKLLKDAKGQLRIHIIDNMSRICLRETS).

This sequence belongs to the SCC2/Nipped-B family. As to quaternary structure, interacts with ssl3.

It is found in the nucleus. The protein localises to the chromosome. Functionally, plays a structural role in chromatin. Chromatid cohesion molecule required for equal sister chromatid separation in anaphase. May form a stable link between chromatids in S phase that is split rather than removed in anaphase. Also required for spindle-kinetochore interaction in early mitosis and inhibit sister chromatid separation until the cleavage of Rad21 in anaphase. The protein is Sister chromatid cohesion protein mis4 (mis4) of Schizosaccharomyces pombe (strain 972 / ATCC 24843) (Fission yeast).